Reading from the N-terminus, the 250-residue chain is tRNA:m(4)X modification enzyme TRM13 (250 aa).

Basic residues predominate over residues 1–10 (MGRAPAKRKP). The tract at residues 1–20 (MGRAPAKRKPSSPPPPPPPG) is disordered. The segment covering 11-20 (SSPPPPPPPG) has biased composition (pro residues). Residues 62-89 (LVPCPVDPSHTVLEENLEAHVGKCPLKK) form a CHHC U11-48K-type zinc finger. Positions 65, 71, 81, and 85 each coordinate Zn(2+).

The protein belongs to the methyltransferase TRM13 family.

It localises to the nucleus. It is found in the cytoplasm. The enzyme catalyses cytidine(4) in tRNA(Pro) + S-adenosyl-L-methionine = 2'-O-methylcytidine(4) in tRNA(Pro) + S-adenosyl-L-homocysteine + H(+). It catalyses the reaction cytidine(4) in tRNA(Gly)(GCC) + S-adenosyl-L-methionine = 2'-O-methylcytidine(4) in tRNA(Gly)(GCC) + S-adenosyl-L-homocysteine + H(+). It carries out the reaction adenosine(4) in tRNA(His) + S-adenosyl-L-methionine = 2'-O-methyladenosine(4) in tRNA(His) + S-adenosyl-L-homocysteine + H(+). In terms of biological role, tRNA methylase that catalyzes 2'-O-methyladenosine (Am) nucleoside formation on tRNA(Gly)(GCC) in vitro. May 2'-O-methylate cytidine(4) in tRNA(Pro) and tRNA(Gly)(GCC), and adenosine(4) in tRNA(His). Involved in salt stress tolerance. The sequence is that of tRNA:m(4)X modification enzyme TRM13 from Oryza sativa subsp. japonica (Rice).